We begin with the raw amino-acid sequence, 194 residues long: uncharacterized protein (194 aa).

The segment at glycine 62–tyrosine 93 is disordered.

As to expression, expressed most abundantly in the brain at protein level. Present in cortex, cerebellum and midbrain. Found in neurons. Elevated expressions detected in Alzheimer brain samples. Also expressed in testis.

The protein localises to the cytoplasm. This is an uncharacterized protein from Homo sapiens (Human).